Reading from the N-terminus, the 394-residue chain is Hemagglutinin-esterase (394 aa).

A signal peptide spans 1–16; sequence MARFIILFLLLAPVYS. Residues 17-347 are Extracellular-facing; it reads RLCLRNHPDT…NNRVDAIPPQ (331 aa). S32 is an active-site residue. The short motif at 119–121 is the Cell attachment site element; sequence RGD. Active-site residues include D261 and H264. A glycan (N-linked (GlcNAc...) asparagine; by host) is linked at N333. The tract at residues 335 to 358 is highly polymorphic region; it reads TDVNNRVDAIPPQLSNIFISMGVA. The chain crosses the membrane as a helical span at residues 348–368; the sequence is LSNIFISMGVAGFGIALFLAG. Topologically, residues 369–394 are cytoplasmic; it reads WKACVWIAAFMYKSRGRNPPANLSVA.

Its subcellular location is the host membrane. The protein resides in the virion membrane. The enzyme catalyses N-acetyl-9-O-acetylneuraminate + H2O = N-acetylneuraminate + acetate + H(+). It carries out the reaction N-acetyl-4-O-acetylneuraminate + H2O = N-acetylneuraminate + acetate + H(+). In terms of biological role, performs attachment to host receptor thereby inducing virus particle entry into target cell. Binds specifically to 5-N-acetyl-4-O-acetyl neuraminic acid on host cells, which plays a major role in cell tropism of the virus. ALso mediates de-O-acetylation of N-acetyl-4-O-acetylneuraminic acid. This receptor-destroying activity is important for virus release as it probably helps preventing self-aggregation and ensures the efficient spread of the progeny virus from cell to cell. The highly polymorphic region (HPR) modulates the virulence in host. Catalyzes the removal of terminal sialic acid residues from viral and cellular glycoconjugates. The protein is Hemagglutinin-esterase of Gadus morhua (Atlantic cod).